Consider the following 239-residue polypeptide: Glucosamine-6-phosphate deaminase (239 aa).

The active-site Proton acceptor; for enolization step is Asp-62. The active-site For ring-opening step is Asn-128. His-130 functions as the Proton acceptor; for ring-opening step in the catalytic mechanism. The active-site For ring-opening step is Glu-135.

This sequence belongs to the glucosamine/galactosamine-6-phosphate isomerase family. NagB subfamily.

The catalysed reaction is alpha-D-glucosamine 6-phosphate + H2O = beta-D-fructose 6-phosphate + NH4(+). It functions in the pathway amino-sugar metabolism; N-acetylneuraminate degradation; D-fructose 6-phosphate from N-acetylneuraminate: step 5/5. Catalyzes the reversible isomerization-deamination of glucosamine 6-phosphate (GlcN6P) to form fructose 6-phosphate (Fru6P) and ammonium ion. The sequence is that of Glucosamine-6-phosphate deaminase from Lactobacillus helveticus (strain DPC 4571).